The sequence spans 769 residues: P-selectin (769 aa).

The first 32 residues, M1–E32, serve as a signal peptide directing secretion. Over L33 to A717 the chain is Extracellular. N-linked (GlcNAc...) asparagine glycans are attached at residues N54 and N80. The C-type lectin domain maps to A58–C158. 21 cysteine pairs are disulfide-bonded: C60-C158, C131-C150, C163-C174, C168-C183, C185-C194, C200-C244, C230-C257, C262-C306, C292-C319, C324-C368, C354-C381, C386-C430, C416-C443, C448-C492, C478-C505, C510-C554, C540-C567, C581-C625, C611-C638, C643-C687, and C673-C700. Positions 121, 123, and 124 each coordinate Ca(2+). N123 contacts a carbohydrate. The a carbohydrate site is built by E133 and N146. Ca(2+) is bound by residues N146 and D147. One can recognise an EGF-like domain in the interval Y159–E195. N-linked (GlcNAc...) asparagine glycosylation occurs at N180. Sushi domains follow at residues R198–A259, V260–A321, I322–A383, L384–A445, V446–A507, S508–V569, L579–A640, and V641–A702. 2 N-linked (GlcNAc...) asparagine glycosylation sites follow: N212 and N219. N347 carries an N-linked (GlcNAc...) asparagine glycan. N-linked (GlcNAc...) asparagine glycosylation occurs at N398. Residue N604 is glycosylated (N-linked (GlcNAc...) asparagine). N655, N662, and N680 each carry an N-linked (GlcNAc...) asparagine glycan. A helical membrane pass occupies residues A718–L734. At R735–P769 the chain is on the cytoplasmic side. Positions Q740–P769 are disordered. An Endocytosis signal motif is present at residues Y757–F760. The interaction with SNX17 stretch occupies residues F760 to P769.

It belongs to the selectin/LECAM family. As to quaternary structure, interacts with SNX17. Interacts with SELPLG/PSGL1 and PODXL2 and mediates neutrophil adhesion and leukocyte rolling. This interaction requires the sialyl-Lewis X epitope of SELPLG and PODXL2, and specific tyrosine sulfation on SELPLG. Interacts (via C-type lectin domain) with alpha-IIb/beta3 integrin ITGA2B:ITGB3 and alpha-V/beta-3 integrin ITGAV:ITGB3. Interacts with alpha5/beta1 integrin ITGA5:ITGB1 and alpha4/beta1 integrin ITGA4:ITGB.

It is found in the cell membrane. Ca(2+)-dependent receptor for myeloid cells that binds to carbohydrates on neutrophils and monocytes. Mediates the interaction of activated endothelial cells or platelets with leukocytes. The ligand recognized is sialyl-Lewis X. Mediates rapid rolling of leukocyte rolling over vascular surfaces during the initial steps in inflammation through interaction with SELPLG. Mediates cell-cell interactions and cell adhesion via the interaction with integrin alpha-IIb/beta3 (ITGA2B:ITGB3) and integrin alpha-V/beta-3 (ITGAV:ITGB3). This is P-selectin (SELP) from Ovis aries (Sheep).